The following is a 190-amino-acid chain: Peptidyl-tRNA hydrolase (190 aa).

Tyrosine 14 provides a ligand contact to tRNA. The active-site Proton acceptor is histidine 19. TRNA-binding residues include tyrosine 64 and asparagine 66.

This sequence belongs to the PTH family. In terms of assembly, monomer.

The protein resides in the cytoplasm. It carries out the reaction an N-acyl-L-alpha-aminoacyl-tRNA + H2O = an N-acyl-L-amino acid + a tRNA + H(+). Functionally, hydrolyzes ribosome-free peptidyl-tRNAs (with 1 or more amino acids incorporated), which drop off the ribosome during protein synthesis, or as a result of ribosome stalling. Catalyzes the release of premature peptidyl moieties from peptidyl-tRNA molecules trapped in stalled 50S ribosomal subunits, and thus maintains levels of free tRNAs and 50S ribosomes. This chain is Peptidyl-tRNA hydrolase, found in Rhodopirellula baltica (strain DSM 10527 / NCIMB 13988 / SH1).